The following is a 376-amino-acid chain: Alanine racemase (376 aa).

The active-site Proton acceptor; specific for D-alanine is K40. Position 40 is an N6-(pyridoxal phosphate)lysine (K40). R138 contributes to the substrate binding site. Residue Y270 is the Proton acceptor; specific for L-alanine of the active site. M317 is a substrate binding site.

Belongs to the alanine racemase family. It depends on pyridoxal 5'-phosphate as a cofactor.

The enzyme catalyses L-alanine = D-alanine. It functions in the pathway amino-acid biosynthesis; D-alanine biosynthesis; D-alanine from L-alanine: step 1/1. Catalyzes the interconversion of L-alanine and D-alanine. May also act on other amino acids. This Lactobacillus delbrueckii subsp. bulgaricus (strain ATCC 11842 / DSM 20081 / BCRC 10696 / JCM 1002 / NBRC 13953 / NCIMB 11778 / NCTC 12712 / WDCM 00102 / Lb 14) protein is Alanine racemase (alr).